The sequence spans 156 residues: 6,7-dimethyl-8-ribityllumazine synthase (156 aa).

Residues F23, 57 to 59 (AFE), and 81 to 83 (AVI) each bind 5-amino-6-(D-ribitylamino)uracil. Residue 86 to 87 (ST) coordinates (2S)-2-hydroxy-3-oxobutyl phosphate. The active-site Proton donor is the H89. F114 is a binding site for 5-amino-6-(D-ribitylamino)uracil. R128 provides a ligand contact to (2S)-2-hydroxy-3-oxobutyl phosphate.

The protein belongs to the DMRL synthase family.

The enzyme catalyses (2S)-2-hydroxy-3-oxobutyl phosphate + 5-amino-6-(D-ribitylamino)uracil = 6,7-dimethyl-8-(1-D-ribityl)lumazine + phosphate + 2 H2O + H(+). It participates in cofactor biosynthesis; riboflavin biosynthesis; riboflavin from 2-hydroxy-3-oxobutyl phosphate and 5-amino-6-(D-ribitylamino)uracil: step 1/2. Functionally, catalyzes the formation of 6,7-dimethyl-8-ribityllumazine by condensation of 5-amino-6-(D-ribitylamino)uracil with 3,4-dihydroxy-2-butanone 4-phosphate. This is the penultimate step in the biosynthesis of riboflavin. The protein is 6,7-dimethyl-8-ribityllumazine synthase of Sulfurospirillum multivorans (Dehalospirillum multivorans).